A 150-amino-acid polypeptide reads, in one-letter code: uncharacterized protein (150 aa).

Residues 1–39 (MKQRFSQVATVIFFVMSIRSPRNLGFFFTLALFVVLVCS) form the signal peptide.

This is an uncharacterized protein from Saccharomyces cerevisiae (strain ATCC 204508 / S288c) (Baker's yeast).